The sequence spans 72 residues: Translation initiation factor IF-1 (72 aa).

The S1-like domain occupies 1 to 72 (MSKEDSFEME…SKGRITYRAR (72 aa)).

Belongs to the IF-1 family. In terms of assembly, component of the 30S ribosomal translation pre-initiation complex which assembles on the 30S ribosome in the order IF-2 and IF-3, IF-1 and N-formylmethionyl-tRNA(fMet); mRNA recruitment can occur at any time during PIC assembly.

The protein resides in the cytoplasm. Functionally, one of the essential components for the initiation of protein synthesis. Stabilizes the binding of IF-2 and IF-3 on the 30S subunit to which N-formylmethionyl-tRNA(fMet) subsequently binds. Helps modulate mRNA selection, yielding the 30S pre-initiation complex (PIC). Upon addition of the 50S ribosomal subunit IF-1, IF-2 and IF-3 are released leaving the mature 70S translation initiation complex. This chain is Translation initiation factor IF-1, found in Pseudomonas savastanoi pv. phaseolicola (strain 1448A / Race 6) (Pseudomonas syringae pv. phaseolicola (strain 1448A / Race 6)).